Reading from the N-terminus, the 324-residue chain is E3 ubiquitin-protein ligase SIAH2 (324 aa).

The span at 1-15 shows a compositional bias: polar residues; sequence MSRPSSTGPSANKPC. Residues 1 to 42 are disordered; sequence MSRPSSTGPSANKPCSKQPPPQPQHTPSPAAPPAAATISAAG. A Phosphoserine modification is found at S6. The residue at position 16 (S16) is a Phosphoserine; by DYRK2. Residues 17–32 show a composition bias toward pro residues; sequence KQPPPQPQHTPSPAAP. A Phosphothreonine; by DYRK2 modification is found at T26. S28 is modified (phosphoserine; by DYRK2 and MAPK14). Residues 33–42 show a composition bias toward low complexity; the sequence is PAAATISAAG. S68 carries the post-translational modification Phosphoserine; by DYRK2. The RING-type zinc finger occupies 80-115; that stretch reads CPVCFDYVLPPILQCQAGHLVCNQCRQKLSCCPTCR. T119 carries the post-translational modification Phosphothreonine; by DYRK2. Positions 130–322 are SBD; it reads VASAVLFPCK…LGINVTISTC (193 aa). An SIAH-type zinc finger spans residues 133 to 193; sequence AVLFPCKYAT…VMSHLMHAHK (61 aa). Zn(2+) is bound by residues C138, C145, H157, C161, C168, C175, H187, and H192.

Belongs to the SINA (Seven in absentia) family. As to quaternary structure, homodimer. Interacts with UBE2E2. Interacts with PEG3. Interacts with VAV1, without mediating its ubiquitin-mediated degradation. Interacts with CACYBP/SIP. Probable component of some large E3 complex possibly composed of UBE2D1, SIAH2, CACYBP/SIP, SKP1, APC and TBL1X. Interacts with PEG10, which may inhibit its activity. Interacts with EGLN2 and SNCAIP. Interacts with DYRK2. Interacts with NR1D1 and NR1D2. Interacts with DCC. Interacts with AXIN1. Phosphorylated at Ser-28 by MAPK14, which mediates the degradation by the proteasome of EGLN3. Phosphorylated at Ser-28 by DYRK2; this increases the ubiquitin ligase activity and promotes degradation of EGLN3. In terms of tissue distribution, widely expressed at low level.

It localises to the cytoplasm. Its subcellular location is the nucleus. It carries out the reaction S-ubiquitinyl-[E2 ubiquitin-conjugating enzyme]-L-cysteine + [acceptor protein]-L-lysine = [E2 ubiquitin-conjugating enzyme]-L-cysteine + N(6)-ubiquitinyl-[acceptor protein]-L-lysine.. It participates in protein modification; protein ubiquitination. With respect to regulation, inhibited by interaction with SNCAIP (isoform 2, but not isoform 1). May be inhibited by interaction with PEG10. Its function is as follows. E3 ubiquitin-protein ligase that mediates ubiquitination and subsequent proteasomal degradation of target proteins. E3 ubiquitin ligases accept ubiquitin from an E2 ubiquitin-conjugating enzyme in the form of a thioester and then directly transfers the ubiquitin to targeted substrates. Mediates E3 ubiquitin ligase activity either through direct binding to substrates or by functioning as the essential RING domain subunit of larger E3 complexes. Triggers the ubiquitin-mediated degradation of many substrates, including proteins involved in transcription regulation (GPS2, POU2AF1, PML, NCOR1), a cell surface receptor (DCC), an antiapoptotic protein (BAG1), and a protein involved in synaptic vesicle function in neurons (SYP). Mediates ubiquitination and proteasomal degradation of DYRK2 in response to hypoxia. It is thereby involved in apoptosis, tumor suppression, cell cycle, transcription and signaling processes. Has some overlapping function with SIAH1. Triggers the ubiquitin-mediated degradation of TRAF2, whereas SIAH1 does not. Promotes monoubiquitination of SNCA. Regulates cellular clock function via ubiquitination of the circadian transcriptional repressors NR1D1 and NR1D2 leading to their proteasomal degradation. Plays an important role in mediating the rhythmic degradation/clearance of NR1D1 and NR1D2 contributing to their circadian profile of protein abundance. Mediates ubiquitination and degradation of EGLN2 and EGLN3 in response to the unfolded protein response (UPR), leading to their degradation and subsequent stabilization of ATF4. Also part of the Wnt signaling pathway in which it mediates the Wnt-induced ubiquitin-mediated proteasomal degradation of AXIN1. The chain is E3 ubiquitin-protein ligase SIAH2 (SIAH2) from Homo sapiens (Human).